The following is a 413-amino-acid chain: Eukaryotic initiation factor 4A-9 (413 aa).

Positions 40–68 (HSFDAMGLKENLLRGIYAYGFEKPSAIQQ) match the Q motif motif. The region spanning 71–241 (IVPFCKGLDV…RKFMNKPVRI (171 aa)) is the Helicase ATP-binding domain. 84–91 (AQSGTGKT) contacts ATP. The short motif at 189 to 192 (DEAD) is the DEAD box element. Residues 252–413 (GIKQFYVNVD…ELPANVADLL (162 aa)) enclose the Helicase C-terminal domain.

The protein belongs to the DEAD box helicase family. eIF4A subfamily. As to quaternary structure, eIF4F is a multi-subunit complex, the composition of which varies with external and internal environmental conditions. It is composed of at least EIF4A, EIF4E and EIF4G.

The enzyme catalyses ATP + H2O = ADP + phosphate + H(+). In terms of biological role, ATP-dependent RNA helicase which is a subunit of the eIF4F complex involved in cap recognition and is required for mRNA binding to ribosome. In the current model of translation initiation, eIF4A unwinds RNA secondary structures in the 5'-UTR of mRNAs which is necessary to allow efficient binding of the small ribosomal subunit, and subsequent scanning for the initiator codon. The chain is Eukaryotic initiation factor 4A-9 from Nicotiana tabacum (Common tobacco).